Consider the following 419-residue polypeptide: L-rhamnose isomerase (419 aa).

Residues His262, Asp294, and Asp296 each coordinate Mn(2+).

It belongs to the rhamnose isomerase family. In terms of assembly, homotetramer. Mn(2+) is required as a cofactor.

The protein localises to the cytoplasm. The catalysed reaction is L-rhamnopyranose = L-rhamnulose. The protein operates within carbohydrate degradation; L-rhamnose degradation; glycerone phosphate from L-rhamnose: step 1/3. Its function is as follows. Catalyzes the interconversion of L-rhamnose and L-rhamnulose. The polypeptide is L-rhamnose isomerase (Salmonella gallinarum (strain 287/91 / NCTC 13346)).